Consider the following 99-residue polypeptide: Large ribosomal subunit protein uL23 (99 aa).

It belongs to the universal ribosomal protein uL23 family. In terms of assembly, part of the 50S ribosomal subunit. Contacts protein L29, and trigger factor when it is bound to the ribosome.

Functionally, one of the early assembly proteins it binds 23S rRNA. One of the proteins that surrounds the polypeptide exit tunnel on the outside of the ribosome. Forms the main docking site for trigger factor binding to the ribosome. This is Large ribosomal subunit protein uL23 from Shewanella sediminis (strain HAW-EB3).